Here is a 59-residue protein sequence, read N- to C-terminus: DNA gyrase inhibitor YacG (59 aa).

Residues Cys7, Cys10, Cys25, and Cys29 each contribute to the Zn(2+) site.

The protein belongs to the DNA gyrase inhibitor YacG family. In terms of assembly, interacts with GyrB. It depends on Zn(2+) as a cofactor.

In terms of biological role, inhibits all the catalytic activities of DNA gyrase by preventing its interaction with DNA. Acts by binding directly to the C-terminal domain of GyrB, which probably disrupts DNA binding by the gyrase. The protein is DNA gyrase inhibitor YacG of Geobacter sulfurreducens (strain ATCC 51573 / DSM 12127 / PCA).